A 924-amino-acid polypeptide reads, in one-letter code: MDVLPTGGGRPGLRTELEFRGGGGEARLESQEEETIPAAPPAPRLRGAAERPRRSRDTWDGDEDTEPGEACGGRTSRTASLVSGLLNELYSCTEEEEAAGGGRGAEGRRRRRDSLDSSTEASGSDVVLGGRSGAGDSRVLQELQERPSQRHQMLYLRQKDANELKTILRELKYRIGIQSAKLLRHLKQKDRLLHKVQRNCDIVTACLQAVSQKRRVDTKLKFTLEPSLGQNGFQQWYDALKAVARLSTGIPKEWRRKVWLTLADHYLHSIAIDWDKTMRFTFNERSNPDDDSMGIQIVKDLHRTGCSSYCGQEAEQDRVVLKRVLLAYARWNKTVGYCQGFNILAALILEVMEGNEGDALKIMIYLIDKVLPESYFVNNLRALSVDMAVFRDLLRMKLPELSQHLDTLQRTANKESGGGYEPPLTNVFTMQWFLTLFATCLPNQTVLKIWDSVFFEGSEIILRVSLAIWAKLGEQIECCETADEFYSTMGRLTQEMLENDLLQSHELMQTVYSMAPFPFPQLAELREKYTYNITPFPATVKPTSVSGRHSKARDSDEENDPDDEDAVVNAVGCLGPFSGFLAPELQKYQKQIKEPNEEQSLRSNNIAELSPGAINSCRSEYHAAFNSMMMERMTTDINALKRQYSRIKKKQQQQVHQVYIRADKGPVTSILPSQVNSSPVINHLLLGKKMKMTNRAAKNAVIHIPGHTGGKISPVPYEDLKTKLNSPWRTHIRVHKKNMPRTKSHPGCGDTVGLIDEQNEASKTNGLGAAEAFPSGCTATAGREGSSPEGSTRRTIEGQSPEPVFGDADVDVSAVQAKLGALELNQRDAAAETELRVHPPCQRHCPEPPSAPEENKATSKAPQGSNSKTPIFSPFPSVKPLRKSATARNLGLYGPTERTPTVHFPQMSRSFSKPGGGNSGTKKR.

The segment covering 1-11 (MDVLPTGGGRP) has biased composition (gly residues). Disordered regions lie at residues 1 to 76 (MDVL…GRTS) and 94 to 134 (EEEE…RSGA). The segment covering 47–59 (GAAERPRRSRDTW) has biased composition (basic and acidic residues). A Rab-GAP TBC domain is found at 249-457 (GIPKEWRRKV…KIWDSVFFEG (209 aa)). Disordered regions lie at residues 541 to 564 (KPTS…PDDE), 776 to 806 (GCTA…PVFG), and 838 to 924 (HPPC…TKKR). The segment covering 555 to 564 (SDEENDPDDE) has biased composition (acidic residues). Ser-800 is subject to Phosphoserine. The span at 858 to 870 (TSKAPQGSNSKTP) shows a compositional bias: polar residues. A compositionally biased stretch (gly residues) spans 914-924 (PGGGNSGTKKR).

Its subcellular location is the cell membrane. May act as a GTPase-activating protein for Rab family protein(s). In Homo sapiens (Human), this protein is TBC1 domain family member 30 (TBC1D30).